Reading from the N-terminus, the 92-residue chain is Putative phosphotransferase enzyme IIB component SgcB (92 aa).

The PTS EIIB type-2 domain maps to 1–92 (MKKILVACGT…KQQIKALLTQ (92 aa)). Cysteine 8 acts as the Phosphocysteine intermediate in catalysis.

The protein localises to the cytoplasm. In terms of biological role, the phosphoenolpyruvate-dependent sugar phosphotransferase system (sugar PTS), a major carbohydrate active -transport system, catalyzes the phosphorylation of incoming sugar substrates concomitantly with their translocation across the cell membrane. The polypeptide is Putative phosphotransferase enzyme IIB component SgcB (sgcB) (Escherichia coli (strain K12)).